Reading from the N-terminus, the 335-residue chain is Calcium/calmodulin-dependent protein kinase type I (335 aa).

The Protein kinase domain occupies 31-291 (YRVGRVLGGG…AADALKHPFL (261 aa)). 37–45 (LGGGTYATV) provides a ligand contact to ATP. Asp154 (proton acceptor) is an active-site residue. Position 192 is a phosphothreonine; by autocatalysis (Thr192). Residues 310–334 (NARKTFRTAYNAVRAFNTWKKLENK) form a calmodulin-binding region.

Belongs to the protein kinase superfamily. CAMK Ser/Thr protein kinase family. CaMK subfamily.

The protein localises to the cytoplasm. It catalyses the reaction L-seryl-[protein] + ATP = O-phospho-L-seryl-[protein] + ADP + H(+). The enzyme catalyses L-threonyl-[protein] + ATP = O-phospho-L-threonyl-[protein] + ADP + H(+). Functionally, important in cell cycle regulation. This chain is Calcium/calmodulin-dependent protein kinase type I (cmk1), found in Schizosaccharomyces pombe (strain 972 / ATCC 24843) (Fission yeast).